The chain runs to 347 residues: Protein pelota homolog (347 aa).

The protein belongs to the eukaryotic release factor 1 family. Pelota subfamily. In terms of assembly, monomer. A divalent metal cation is required as a cofactor.

The protein resides in the cytoplasm. Functionally, may function in recognizing stalled ribosomes, interact with stem-loop structures in stalled mRNA molecules, and effect endonucleolytic cleavage of the mRNA. May play a role in the release non-functional ribosomes and degradation of damaged mRNAs. Has endoribonuclease activity. The protein is Protein pelota homolog of Methanocaldococcus jannaschii (strain ATCC 43067 / DSM 2661 / JAL-1 / JCM 10045 / NBRC 100440) (Methanococcus jannaschii).